We begin with the raw amino-acid sequence, 555 residues long: Dihydroxy-acid dehydratase (555 aa).

D78 contributes to the Mg(2+) binding site. C119 serves as a coordination point for [2Fe-2S] cluster. Residues D120 and K121 each coordinate Mg(2+). The residue at position 121 (K121) is an N6-carboxylysine. C191 contributes to the [2Fe-2S] cluster binding site. A Mg(2+)-binding site is contributed by E444. The active-site Proton acceptor is S470.

The protein belongs to the IlvD/Edd family. As to quaternary structure, homodimer. The cofactor is [2Fe-2S] cluster. Mg(2+) is required as a cofactor.

It catalyses the reaction (2R)-2,3-dihydroxy-3-methylbutanoate = 3-methyl-2-oxobutanoate + H2O. The enzyme catalyses (2R,3R)-2,3-dihydroxy-3-methylpentanoate = (S)-3-methyl-2-oxopentanoate + H2O. The protein operates within amino-acid biosynthesis; L-isoleucine biosynthesis; L-isoleucine from 2-oxobutanoate: step 3/4. It functions in the pathway amino-acid biosynthesis; L-valine biosynthesis; L-valine from pyruvate: step 3/4. Functionally, functions in the biosynthesis of branched-chain amino acids. Catalyzes the dehydration of (2R,3R)-2,3-dihydroxy-3-methylpentanoate (2,3-dihydroxy-3-methylvalerate) into 2-oxo-3-methylpentanoate (2-oxo-3-methylvalerate) and of (2R)-2,3-dihydroxy-3-methylbutanoate (2,3-dihydroxyisovalerate) into 2-oxo-3-methylbutanoate (2-oxoisovalerate), the penultimate precursor to L-isoleucine and L-valine, respectively. The polypeptide is Dihydroxy-acid dehydratase (Maridesulfovibrio salexigens (strain ATCC 14822 / DSM 2638 / NCIMB 8403 / VKM B-1763) (Desulfovibrio salexigens)).